Here is a 446-residue protein sequence, read N- to C-terminus: RUN domain-containing protein 3A (446 aa).

Residues 1 to 298 form an interaction with RAP2A region; sequence METSFVQTTM…LQLQLEEAAA (298 aa). The region spanning 52–189 is the RUN domain; that stretch reads DDSSEEFVNF…IDFSFCLKGE (138 aa). Thr215 is subject to Phosphothreonine. Residues 216–239 form a disordered region; sequence DEEERHSAESSTSEDNSPEHPYLP. Ser232 carries the phosphoserine modification. Positions 267–322 form a coiled coil; the sequence is YLEELVRLRESQLKDLEAENRRLQLQLEEAAAQNQREKRELEGVILELQEQLTGLI. The segment covering 372 to 384 has biased composition (polar residues); it reads PLSAEASLSSDSQ. The interval 372 to 404 is disordered; the sequence is PLSAEASLSSDSQRLGEGTRDEEPWGPIGKDPT. Phosphoserine is present on residues Ser416 and Ser419.

Belongs to the RUNDC3 family. As to quaternary structure, interacts with the GTP-bound form of RAP2A.

Its function is as follows. May act as an effector of RAP2A in neuronal cells. This chain is RUN domain-containing protein 3A (RUNDC3A), found in Pongo abelii (Sumatran orangutan).